The sequence spans 237 residues: tRNA (guanine-N(7)-)-methyltransferase (237 aa).

4 residues coordinate S-adenosyl-L-methionine: E67, E92, D119, and D142. D142 is a catalytic residue. Substrate contacts are provided by residues K146, D178, and 215–218; that span reads TKFE.

Belongs to the class I-like SAM-binding methyltransferase superfamily. TrmB family.

It carries out the reaction guanosine(46) in tRNA + S-adenosyl-L-methionine = N(7)-methylguanosine(46) in tRNA + S-adenosyl-L-homocysteine. Its pathway is tRNA modification; N(7)-methylguanine-tRNA biosynthesis. Catalyzes the formation of N(7)-methylguanine at position 46 (m7G46) in tRNA. The sequence is that of tRNA (guanine-N(7)-)-methyltransferase from Aeromonas hydrophila subsp. hydrophila (strain ATCC 7966 / DSM 30187 / BCRC 13018 / CCUG 14551 / JCM 1027 / KCTC 2358 / NCIMB 9240 / NCTC 8049).